The sequence spans 552 residues: Membrane protein insertase YidC (552 aa).

The next 5 helical transmembrane spans lie at 7-24 (VLWV…DNWQ), 364-384 (WGWA…PLSA), 434-454 (LPVV…LASV), 473-493 (PFFI…SLNP), and 508-528 (PIAF…YYVV).

It belongs to the OXA1/ALB3/YidC family. Type 1 subfamily. As to quaternary structure, interacts with the Sec translocase complex via SecD. Specifically interacts with transmembrane segments of nascent integral membrane proteins during membrane integration.

It localises to the cell inner membrane. Functionally, required for the insertion and/or proper folding and/or complex formation of integral membrane proteins into the membrane. Involved in integration of membrane proteins that insert both dependently and independently of the Sec translocase complex, as well as at least some lipoproteins. Aids folding of multispanning membrane proteins. This Burkholderia cenocepacia (strain HI2424) protein is Membrane protein insertase YidC.